A 464-amino-acid chain; its full sequence is Na(+)/H(+) antiporter NhaA 1 (464 aa).

A run of 11 helical transmembrane segments spans residues 41-61, 85-105, 121-141, 150-170, 180-200, 207-227, 234-254, 329-349, 363-383, 399-419, and 428-448; these read GGLI…SPLA, LHHW…GLEL, VLPI…YMSL, GWGI…ALLA, FLVA…AVFY, SFLI…MIGI, FFVG…ATLA, VAFF…IDFG, VVFG…WLAI, IIGA…IAEL, and IIQA…AGYL.

This sequence belongs to the NhaA Na(+)/H(+) (TC 2.A.33) antiporter family.

It is found in the cell inner membrane. It catalyses the reaction Na(+)(in) + 2 H(+)(out) = Na(+)(out) + 2 H(+)(in). Functionally, na(+)/H(+) antiporter that extrudes sodium in exchange for external protons. The polypeptide is Na(+)/H(+) antiporter NhaA 1 (Saccharophagus degradans (strain 2-40 / ATCC 43961 / DSM 17024)).